A 350-amino-acid chain; its full sequence is Autophagy-related protein 3 (350 aa).

Residues 85–166 are flexible region; the sequence is NFAGDAGLEE…EEDDEAIIRD (82 aa). Residues 97 to 171 form a disordered region; it reads VDDGDEFKGS…AIIRDTDASG (75 aa). The segment covering 102 to 113 has biased composition (basic and acidic residues); that stretch reads EFKGSKGDDDGW. A compositionally biased stretch (acidic residues) spans 146-161; that stretch reads DDDDDIPDMEDEEDDE. The Glycyl thioester intermediate role is filled by Cys-244. The interval 248–326 is handle region; sequence PVMKTLLDRA…DQEVAIRVDQ (79 aa). N6-acetyllysine is present on residues Lys-262 and Lys-267.

The protein belongs to the ATG3 family. In terms of assembly, monomer. Interacts with ATG8 through an intermediate thioester bond through the C-terminal Gly of ATG8. Also interacts with the 40 amino acid C-terminal region of the E1-like ATG7 enzyme. Also interacts with the ATG12-ATG5 conjugate. Interacts with HAT1. Post-translationally, acetylated by HAT1 at Lys-262 and Lys-267, which affects the interaction with ATG8 and prevents autophagy during both appressorium development and nutrient starvation.

It is found in the preautophagosomal structure. The protein resides in the cytoplasm. Its function is as follows. E2 conjugating enzyme required for the cytoplasm to vacuole transport (Cvt) and autophagy. Required for selective autophagic degradation of the nucleus (nucleophagy) as well as for mitophagy which contributes to regulate mitochondrial quantity and quality by eliminating the mitochondria to a basal level to fulfill cellular energy requirements and preventing excess ROS production. Responsible for the E2-like covalent binding of phosphatidylethanolamine to the C-terminal Gly of ATG8. The ATG12-ATG5 conjugate plays a role of an E3 and promotes the transfer of ATG8 from ATG3 to phosphatidylethanolamine (PE). This step is required for the membrane association of ATG8. The formation of the ATG8-phosphatidylethanolamine conjugate is essential for autophagy and for the cytoplasm to vacuole transport (Cvt). The ATG8-PE conjugate mediates tethering between adjacent membranes and stimulates membrane hemifusion, leading to expansion of the autophagosomal membrane during autophagy. Plays a role in appressorium formation and pathogenicity. The polypeptide is Autophagy-related protein 3 (Pyricularia oryzae (strain 70-15 / ATCC MYA-4617 / FGSC 8958) (Rice blast fungus)).